The sequence spans 560 residues: Nibrin homolog (560 aa).

The 63-residue stretch at 25–87 (YKVGRKDCDV…YGTFFNKVQG (63 aa)) folds into the FHA domain. The 76-residue stretch at 115-190 (TFRLSFVPIV…KQIVLGDWFK (76 aa)) folds into the BRCT domain.

This sequence belongs to the Nibrin family. As to quaternary structure, component of the MRN complex composed of two heterodimers RAD50 and MRE11 associated with a single NBS1. In terms of tissue distribution, mostly expressed in the shoot apex and young flower, but also in young leaves, root tips and stamen, tissues where frequent cell division or meiosis may occur.

The protein localises to the nucleus. Its subcellular location is the chromosome. Functionally, component of the MRN complex, which plays a central role in double-strand break (DSB) repair, DNA recombination, maintenance of telomere integrity and meiosis. The MRN complex is involved in the repair of DNA double-strand breaks (DSBs) via homologous recombination (HR), an error-free mechanism which primarily occurs during S and G2 phases. The complex (1) mediates the end resection of damaged DNA, which generates proper single-stranded DNA, a key initial steps in HR, and is (2) required for the recruitment of other repair factors and efficient activation of ATM and ATR upon DNA damage. The MRN complex possesses single-strand endonuclease activity and double-strand-specific 3'-5' exonuclease activity, which are provided by MRE11, to initiate end resection, which is required for single-strand invasion and recombination. Within the MRN complex, NBS1 acts as a protein-protein adapter, which specifically recognizes and binds phosphorylated proteins, promoting their recruitment to DNA damage sites. Recruits MRE11 and RAD50 components of the MRN complex to DSBs in response to DNA damage. This is Nibrin homolog from Oryza sativa subsp. japonica (Rice).